We begin with the raw amino-acid sequence, 346 residues long: Glucose-6-phosphatase 3 (346 aa).

Residues 1–24 (MESTLGAGIAMAEALQNQLPWLEN) are Lumenal-facing. The helical transmembrane segment at 25-45 (VWLWVTFLGDPKSLFLFYFPA) threads the bilayer. The Cytoplasmic portion of the chain corresponds to 46 to 54 (AYYASRRVG). A helical transmembrane segment spans residues 55-75 (IAVLWISLITEWLNLVFKWFL). At 76-108 (FGDRPFWWVHESGYYSQAPAQVHQFPSSCETGP) the chain is on the lumenal side. Arg-79 serves as a coordination point for substrate. Residues 109 to 129 (GSPSGHCMITGAALWPIMTAV) form a helical membrane-spanning segment. His-114 (proton donor) is an active-site residue. Topologically, residues 130–140 (SSQMATRAHSR) are cytoplasmic. Residues 141–162 (WVRVIPSLAYCTFLLAVGLSRV) traverse the membrane as a helical segment. Arg-161 contacts substrate. At 163–167 (FLLAH) the chain is on the lumenal side. His-167 functions as the Nucleophile in the catalytic mechanism. Residues 168-186 (FPHQVLAGLITGAVLGWLM) form a helical membrane-spanning segment. The Cytoplasmic segment spans residues 187-197 (TPQVPMERELS). A helical transmembrane segment spans residues 198-218 (FYGLTSLALLLGASLIYWTLF). Over 219–254 (TLGLDLSWSINLASKWCERPEWVHLDSRPFASLSRD) the chain is Lumenal. The helical transmembrane segment at 255–273 (SGAALGLGIALHSPCYAQV) threads the bilayer. At 274-283 (RRAHLGYGQK) the chain is on the cytoplasmic side. The chain crosses the membrane as a helical span at residues 284–304 (LVCLVLAMGLLGPLNWLGYPP). At 305 to 307 (QIS) the chain is on the lumenal side. A helical transmembrane segment spans residues 308-328 (LFYIFNFLKYTLWPCLVLALV). The Cytoplasmic segment spans residues 329 to 346 (PWLVHMFSAQEAPPIRSS).

The protein belongs to the glucose-6-phosphatase family.

It is found in the endoplasmic reticulum membrane. It catalyses the reaction D-glucose 6-phosphate + H2O = D-glucose + phosphate. It functions in the pathway carbohydrate biosynthesis; gluconeogenesis. Its activity is regulated as follows. Inhibited by vanadate. In terms of biological role, hydrolyzes glucose-6-phosphate to glucose in the endoplasmic reticulum. May form with the glucose-6-phosphate transporter (SLC37A4/G6PT) a ubiquitously expressed complex responsible for glucose production through glycogenolysis and gluconeogenesis. Probably required for normal neutrophil function. This chain is Glucose-6-phosphatase 3 (G6PC3), found in Bos taurus (Bovine).